We begin with the raw amino-acid sequence, 224 residues long: MTLVTPLQFSTVQPNLYRGSYPREINLPFLRTLRLKYILSLTPEPLSTDPLMVKFCEENNIKTIHIKCQSERKADKTKPKIKRKKKTVPIEYDVVVRCVKFLIDKGHYPCYMHCTNGELIISLVVACMRKFSYWSTVSILNEFLVYNSSINIHERNFIENFNSEIEVDDLDIKDKVPWITVRYIARTATESKDELRVDDANASEKVARVSSVSNSLPKLKFHSM.

T2 bears the Phosphothreonine mark. Residues Q8–L170 enclose the Tyrosine-protein phosphatase domain. C114 serves as the catalytic Phosphocysteine intermediate.

This sequence belongs to the protein-tyrosine phosphatase family.

It is found in the cytoplasm. The enzyme catalyses O-phospho-L-tyrosyl-[protein] + H2O = L-tyrosyl-[protein] + phosphate. Its function is as follows. Required for replication of Brome mosaic virus (BMV). The protein is Putative tyrosine-protein phosphatase OCA6 (OCA6) of Saccharomyces cerevisiae (strain ATCC 204508 / S288c) (Baker's yeast).